The chain runs to 385 residues: HAT1-interacting factor 1 (385 aa).

Residues Gly-80–Glu-199 form an important for interaction with heterotetrameric histone H3 and H4 and for interaction with dimeric histone H2A and H2B region. 2 stretches are compositionally biased toward low complexity: residues Asp-85 to Glu-97 and Asp-105 to Gly-116. A disordered region spans residues Asp-85–Glu-163. A compositionally biased stretch (acidic residues) spans Asp-129–Lys-160. Phosphoserine is present on Ser-174. TPR repeat units follow at residues Val-186–Pro-220, Glu-229–Ala-262, and Ala-289–Asp-322. The segment at Glu-248 to Gln-332 is interaction with dimeric histone H2A and H2B. The disordered stretch occupies residues Val-340–His-385. The segment covering Glu-342 to Ile-359 has biased composition (polar residues).

It belongs to the NASP family. In terms of assembly, homodimer. The homodimer interacts with a histone tetramer containing H3 and H4; the interaction is direct. The homodimer interacts with heterodimeric histone H2A and H2B; the interaction is direct. Component of the nuclear histone acetyltransferase B (HAT-B) complex composed of at least HAT1, HAT2 and HIF1. Does not interact with HAT1 in the absence of HAT2. Interacts with histones H3 and H4 in a HAT1/HAT2 dependent manner. Interaction with heterotetrameric histone H3 and H4 precludes interaction with dimeric histone H2A and H2B, irrespective of the fact that their binding involves non-identical regions of the protein.

The protein localises to the nucleus. In terms of biological role, histone H3 and H4 specific chaperone component of the nuclear histone acetyltransferase B (HAT-B) complex. Involved in chromatin assembly and telomere silencing. The protein is HAT1-interacting factor 1 (HIF1) of Saccharomyces cerevisiae (strain ATCC 204508 / S288c) (Baker's yeast).